Here is a 255-residue protein sequence, read N- to C-terminus: Trans-aconitate 2-methyltransferase (255 aa).

This sequence belongs to the methyltransferase superfamily. Tam family.

The protein localises to the cytoplasm. The catalysed reaction is trans-aconitate + S-adenosyl-L-methionine = (E)-3-(methoxycarbonyl)pent-2-enedioate + S-adenosyl-L-homocysteine. Catalyzes the S-adenosylmethionine monomethyl esterification of trans-aconitate. This Mycolicibacterium gilvum (strain PYR-GCK) (Mycobacterium gilvum (strain PYR-GCK)) protein is Trans-aconitate 2-methyltransferase.